A 370-amino-acid polypeptide reads, in one-letter code: Chloromuconate cycloisomerase (370 aa).

The Proton acceptor role is filled by Lys-165. Mn(2+)-binding residues include Asp-194, Glu-220, and Asp-245. The active-site Proton donor is the Glu-323.

Belongs to the mandelate racemase/muconate lactonizing enzyme family. Requires Mn(2+) as cofactor.

The enzyme catalyses 2-[(2R)-2-chloro-2,5-dihydro-5-oxofuryl]acetate = 3-chloro-cis,cis-muconate + H(+). Its pathway is aromatic compound metabolism; 3-chlorocatechol degradation. This chain is Chloromuconate cycloisomerase (tfdDI), found in Cupriavidus pinatubonensis (strain JMP 134 / LMG 1197) (Cupriavidus necator (strain JMP 134)).